The sequence spans 470 residues: ATP synthase subunit beta (470 aa).

157–164 (GGAGVGKT) is an ATP binding site.

It belongs to the ATPase alpha/beta chains family. F-type ATPases have 2 components, CF(1) - the catalytic core - and CF(0) - the membrane proton channel. CF(1) has five subunits: alpha(3), beta(3), gamma(1), delta(1), epsilon(1). CF(0) has three main subunits: a(1), b(2) and c(9-12). The alpha and beta chains form an alternating ring which encloses part of the gamma chain. CF(1) is attached to CF(0) by a central stalk formed by the gamma and epsilon chains, while a peripheral stalk is formed by the delta and b chains.

The protein resides in the cell membrane. It catalyses the reaction ATP + H2O + 4 H(+)(in) = ADP + phosphate + 5 H(+)(out). In terms of biological role, produces ATP from ADP in the presence of a proton gradient across the membrane. The catalytic sites are hosted primarily by the beta subunits. The protein is ATP synthase subunit beta of Pelotomaculum thermopropionicum (strain DSM 13744 / JCM 10971 / SI).